The primary structure comprises 510 residues: Protein phosphatase 1H (510 aa).

A PPM-type phosphatase domain is found at 73 to 503; sequence STGYAEVINA…DDISVYVIPL (431 aa). Disordered regions lie at residues 105–128 and 188–225; these read VQST…EGLQ and LGEE…PTRF.

This sequence belongs to the PP2C family.

Its subcellular location is the nucleus. It is found in the cytoplasm. The catalysed reaction is O-phospho-L-seryl-[protein] + H2O = L-seryl-[protein] + phosphate. The enzyme catalyses O-phospho-L-threonyl-[protein] + H2O = L-threonyl-[protein] + phosphate. The protein is Protein phosphatase 1H (ppm1h) of Xenopus tropicalis (Western clawed frog).